Here is a 659-residue protein sequence, read N- to C-terminus: MRPRPLLLLFLLFLPMLPAPPTGQPSGRRRGRRSGGTGGGFWGDRVDSQPFAIPYIHPTNPFAPDVAAASGSGPRLRQPARPLGSTWRDQAQRPSAASRRRPATAGAAALTAVAPAHDTSPVPDVDSRGAILRRQYNLSTSPLTSSVASGTNLVLYAAPLNPPLPLQDGTNTHIMATEASNYAQYRVARATIRYRPLVPNAVGGYAISISFWPQTTTTPTSVDMNSITSTDVRILVQPGIASELVIPSERLHYRNQGWRSVETSGVAEEEATSGLVMLCIHGSPVNSYTNTPYTGALGLLDFALELEFRNLTTCNTNTRVSRYSSTARHSARGADGTAELTTTAATRFMKDLHFTGLNGVGEVGRGIALTLLNLADTLLGGLPTELISSAGGQLFYSRPVVSANGEPTVKLYTSVENAQQDKGVAIPHDIDLGDSRVVIQDYDNQHEQDRPTPSPAPSRPFSVLRANDVLWLSLTAAEYDQSTYGSSTGPVYISDSVTLVNVATGAQAVARSLDWSKVTLDGRPLPTVEQYSKTFFVLPLRGKLSFWEAGTTKAGYPYNYNTTASDQILIENAAGHRVAISTYTTRLGAGPVAISAAAVLAPRSALALLEDTFDYPGRAHTFDDFCPECRALGLQGCAFQSTVAELQRLKVKVGKTREL.

Residues 1-23 form the signal peptide; sequence MRPRPLLLLFLLFLPMLPAPPTG. 2 disordered regions span residues 19 to 43 and 64 to 107; these read APPT…GFWG and PDVA…TAGA. The short motif at 28-33 is the Nuclear localization signal element; that stretch reads RRRGRR. Low complexity predominate over residues 92–107; sequence QRPSAASRRRPATAGA. Residues Asn-137 and Asn-310 are each glycosylated (N-linked (GlcNAc...) asparagine; by host). The particle formation stretch occupies residues 367-393; the sequence is IALTLLNLADTLLGGLPTELISSAGGQ. Asn-561 is a glycosylation site (N-linked (GlcNAc...) asparagine; by host). The tract at residues 584-609 is oligomerization; that stretch reads TTRLGAGPVAISAAAVLAPRSALALL.

The protein belongs to the hepevirus capsid protein family. Homodimer. In terms of assembly, self-assembles to form the capsid. The capsid is dominated by dimers that define the 30 morphological units. Interacts with phosphorylated protein ORF3. Interacts with host TMEM134. Interacts with host ASGR1 and ASGR2; these interactions facilitate infection of host hepatocytes. In terms of processing, cleaved by host protease in the N-terminus. N-glycosylated. Post-translationally, not N-glycosylated. The C-terminus of the capsid protein ORF2 is truncated in non-enveloped virions shedded in feces, probably due to host proteases.

Its subcellular location is the secreted. It is found in the virion. The protein localises to the host cytoplasm. The protein resides in the host endoplasmic reticulum. It localises to the host Golgi apparatus. Its subcellular location is the host cell surface. It is found in the host nucleus. Functionally, plays a role in the inhibition of host antibody-mediated neutralization without blocking viral cell entry. Forms an icosahedral capsid with a T=1 symmetry and a 34 nm diameter. The capsid is composed of 60 copies linked to each other. Binds to the 5' end of the genomic RNA to mediate genome encapsidation. Binds to heparin surface proteoglycans (HSPGs) to mediate viral entry. Additionally, the interactions with host ASGR1 and ASGR2 facilitate viral infection of hepatocytes. Inhibits IFN production by blocking host TBK1-induced IRF3 phosphorylation. The nuclear form probably modulates host gene expression. The polypeptide is Pro-secreted protein ORF2 (Bandicota bengalensis (lesser bandicoot rat)).